We begin with the raw amino-acid sequence, 437 residues long: GTPase Obg (437 aa).

Residues S2–L160 form the Obg domain. One can recognise an OBG-type G domain in the interval A161–E338. GTP contacts are provided by residues G167–S174, F192–V196, D214–G217, N284–D287, and S319–I321. S174 and T194 together coordinate Mg(2+). In terms of domain architecture, OCT spans G359 to D437.

The protein belongs to the TRAFAC class OBG-HflX-like GTPase superfamily. OBG GTPase family. Monomer. Mg(2+) is required as a cofactor.

Its subcellular location is the cytoplasm. An essential GTPase which binds GTP, GDP and possibly (p)ppGpp with moderate affinity, with high nucleotide exchange rates and a fairly low GTP hydrolysis rate. Plays a role in control of the cell cycle, stress response, ribosome biogenesis and in those bacteria that undergo differentiation, in morphogenesis control. The protein is GTPase Obg of Streptococcus suis (strain 05ZYH33).